We begin with the raw amino-acid sequence, 442 residues long: Thymidine phosphorylase (442 aa).

The protein belongs to the thymidine/pyrimidine-nucleoside phosphorylase family. As to quaternary structure, homodimer.

It catalyses the reaction thymidine + phosphate = 2-deoxy-alpha-D-ribose 1-phosphate + thymine. The protein operates within pyrimidine metabolism; dTMP biosynthesis via salvage pathway; dTMP from thymine: step 1/2. Functionally, the enzymes which catalyze the reversible phosphorolysis of pyrimidine nucleosides are involved in the degradation of these compounds and in their utilization as carbon and energy sources, or in the rescue of pyrimidine bases for nucleotide synthesis. This is Thymidine phosphorylase from Vibrio parahaemolyticus serotype O3:K6 (strain RIMD 2210633).